The sequence spans 207 residues: ATP synthase subunit 5, mitochondrial (207 aa).

The protein belongs to the ATPase delta chain family. In terms of assembly, F-type ATPases have 2 components, CF(1) - the catalytic core - and CF(0) - the membrane proton channel. CF(1) has five subunits: alpha(3), beta(3), gamma(1), delta(1), epsilon(1). CF(0) has three main subunits: a, b and c.

The protein localises to the mitochondrion. The protein resides in the mitochondrion inner membrane. Functionally, mitochondrial membrane ATP synthase (F(1)F(0) ATP synthase or Complex V) produces ATP from ADP in the presence of a proton gradient across the membrane which is generated by electron transport complexes of the respiratory chain. F-type ATPases consist of two structural domains, F(1) - containing the extramembraneous catalytic core and F(0) - containing the membrane proton channel, linked together by a central stalk and a peripheral stalk. During catalysis, ATP synthesis in the catalytic domain of F(1) is coupled via a rotary mechanism of the central stalk subunits to proton translocation. Part of the complex F(0) domain and the peripheric stalk, which acts as a stator to hold the catalytic alpha(3)beta(3) subcomplex and subunit a/ATP6 static relative to the rotary elements. The chain is ATP synthase subunit 5, mitochondrial (ATP5) from Candida glabrata (strain ATCC 2001 / BCRC 20586 / JCM 3761 / NBRC 0622 / NRRL Y-65 / CBS 138) (Yeast).